A 143-amino-acid polypeptide reads, in one-letter code: Nucleoside diphosphate kinase (143 aa).

The ATP site is built by lysine 11, phenylalanine 59, arginine 87, threonine 93, arginine 104, and asparagine 114. Residue histidine 117 is the Pros-phosphohistidine intermediate of the active site.

The protein belongs to the NDK family. In terms of assembly, homotetramer. Mg(2+) serves as cofactor.

It is found in the cytoplasm. The enzyme catalyses a 2'-deoxyribonucleoside 5'-diphosphate + ATP = a 2'-deoxyribonucleoside 5'-triphosphate + ADP. It carries out the reaction a ribonucleoside 5'-diphosphate + ATP = a ribonucleoside 5'-triphosphate + ADP. Functionally, major role in the synthesis of nucleoside triphosphates other than ATP. The ATP gamma phosphate is transferred to the NDP beta phosphate via a ping-pong mechanism, using a phosphorylated active-site intermediate. This is Nucleoside diphosphate kinase from Ectopseudomonas mendocina (strain ymp) (Pseudomonas mendocina).